A 203-amino-acid polypeptide reads, in one-letter code: Ras-related protein Rab-8B (203 aa).

Residues 22 to 29 (GDSGVGKS), 70 to 74 (DTAGQ), and 128 to 131 (NKCD) each bind GTP. Residues C202 and C203 are each lipidated (S-geranylgeranyl cysteine).

It belongs to the small GTPase superfamily. Rab family.

It localises to the cell membrane. Its function is as follows. Protein transport. Probably involved in vesicular traffic. This is Ras-related protein Rab-8B (rab8B) from Dictyostelium discoideum (Social amoeba).